The following is an 846-amino-acid chain: Rho GTPase-activating protein 12 (846 aa).

The 63-residue stretch at 12-74 folds into the SH3 domain; it reads PGQVYIEVEY…PAQYVKEVTR (63 aa). A compositionally biased stretch (polar residues) spans 152 to 175; it reads LTHNNGKFNNDSHSPKVSSQNRTR. Positions 152 to 241 are disordered; the sequence is LTHNNGKFNN…PPNQGRPDSP (90 aa). 2 positions are modified to phosphoserine: serine 165 and serine 176. A compositionally biased stretch (polar residues) spans 191–200; it reads TSFSQEQSCD. 3 positions are modified to phosphoserine: serine 201, serine 213, and serine 215. A compositionally biased stretch (polar residues) spans 224–234; it reads TEQIRATTPPN. Phosphothreonine occurs at positions 230 and 231. At serine 240 the chain carries Phosphoserine. Position 243 is a phosphotyrosine (tyrosine 243). WW domains are found at residues 265-298 and 358-391; these read IQIN…PPRW and DYTN…LPKY. The segment at 293-316 is disordered; sequence WKPPRWTRDASISKGDFQNPGDQE. Disordered regions lie at residues 428–466 and 580–629; these read DTND…DQEK and ETDE…TKKN. Positions 445-461 are enriched in polar residues; sequence NESSPSSPKHQDTASSP. In terms of domain architecture, PH spans 463–575; it reads DQEKYGLLNV…WFKVLSSTIN (113 aa). The span at 580–590 shows a compositional bias: acidic residues; the sequence is ETDEGIEEEIP. Serine 592 is modified (phosphoserine). Over residues 594 to 609 the composition is skewed to basic and acidic residues; that stretch reads GIEKHDKEKEQKDPKK. Residues 656 to 844 enclose the Rho-GAP domain; the sequence is SNLANLCQRE…LILLELSSIF (189 aa).

Its function is as follows. GTPase activator for the Rho-type GTPases by converting them to an inactive GDP-bound state. This Homo sapiens (Human) protein is Rho GTPase-activating protein 12 (ARHGAP12).